We begin with the raw amino-acid sequence, 124 residues long: MPTINQLIRKGRLGLTHKKKVPALGKSNPQRRGVCTKVYTTTPRKPNSALRKVARVKISGYGEVTAYIPGEGHNLQEHSVVLIRGGRVKDLPGVRYHIIRGALDLRGVQNRKKARSKYGVKKSG.

Position 90 is a 3-methylthioaspartic acid (Asp-90).

This sequence belongs to the universal ribosomal protein uS12 family. In terms of assembly, part of the 30S ribosomal subunit. Contacts proteins S8 and S17. May interact with IF1 in the 30S initiation complex.

With S4 and S5 plays an important role in translational accuracy. Functionally, interacts with and stabilizes bases of the 16S rRNA that are involved in tRNA selection in the A site and with the mRNA backbone. Located at the interface of the 30S and 50S subunits, it traverses the body of the 30S subunit contacting proteins on the other side and probably holding the rRNA structure together. The combined cluster of proteins S8, S12 and S17 appears to hold together the shoulder and platform of the 30S subunit. The polypeptide is Small ribosomal subunit protein uS12 (Wolbachia sp. subsp. Drosophila simulans (strain wRi)).